Here is a 460-residue protein sequence, read N- to C-terminus: Cysteine--tRNA ligase (460 aa).

Cys28 provides a ligand contact to Zn(2+). The short motif at 30-40 (MTVYDYCHLGH) is the 'HIGH' region element. Cys209, His234, and Glu238 together coordinate Zn(2+). The short motif at 266 to 270 (KMSKS) is the 'KMSKS' region element. Residue Lys269 participates in ATP binding.

It belongs to the class-I aminoacyl-tRNA synthetase family. As to quaternary structure, monomer. The cofactor is Zn(2+).

The protein localises to the cytoplasm. The catalysed reaction is tRNA(Cys) + L-cysteine + ATP = L-cysteinyl-tRNA(Cys) + AMP + diphosphate. In Pseudomonas putida (strain ATCC 700007 / DSM 6899 / JCM 31910 / BCRC 17059 / LMG 24140 / F1), this protein is Cysteine--tRNA ligase.